The primary structure comprises 508 residues: Prenylcysteine oxidase 1 (508 aa).

A signal peptide spans 1 to 31 (MDPAAPGLACSILRLGLGLLLLCSWWYPGSA). 3 N-linked (GlcNAc...) asparagine glycosylation sites follow: asparagine 199, asparagine 291, and asparagine 356.

It belongs to the prenylcysteine oxidase family. FAD serves as cofactor.

The protein localises to the lysosome. The catalysed reaction is an S-polyprenyl-L-cysteine + O2 + H2O = a polyprenal + L-cysteine + H2O2. It catalyses the reaction S-(2E,6E)-farnesyl-L-cysteine + O2 + H2O = (2E,6E)-farnesal + L-cysteine + H2O2. The enzyme catalyses [(2E,6E,10E)-geranylgeranyl]-L-cysteine + O2 + H2O = (2E,6E,10E)-geranylgeranial + L-cysteine + H2O2. Prenylcysteine oxidase that cleaves the thioether bond of prenyl-L-cysteines, such as farnesylcysteine and geranylgeranylcysteine. Only active against free prenylcysteines and not prenylcysteine residues within prenylated proteins or peptides. Involved in the final step in the degradation of prenylated proteins, by degrading prenylcysteines after the protein has been degraded. The polypeptide is Prenylcysteine oxidase 1 (Bos taurus (Bovine)).